The chain runs to 806 residues: Protein translocase subunit SecA 2 (806 aa).

Residues Q122, 140 to 144 (GEGKT), and D533 each bind ATP.

This sequence belongs to the SecA family. Monomer and homodimer. Part of the essential Sec protein translocation apparatus which comprises SecA, SecYEG and auxiliary proteins SecDF. Other proteins may also be involved.

The protein localises to the cell membrane. It is found in the cytoplasm. It carries out the reaction ATP + H2O + cellular proteinSide 1 = ADP + phosphate + cellular proteinSide 2.. Part of the Sec protein translocase complex. Interacts with the SecYEG preprotein conducting channel. Has a central role in coupling the hydrolysis of ATP to the transfer of proteins into and across the cell membrane, serving as an ATP-driven molecular motor driving the stepwise translocation of polypeptide chains across the membrane. The sequence is that of Protein translocase subunit SecA 2 from Mycobacterium ulcerans (strain Agy99).